Reading from the N-terminus, the 451-residue chain is UDP-glycosyltransferase 76E11 (451 aa).

UDP-alpha-D-glucose-binding positions include S273, 332–334 (APQ), 349–357 (HCGWNSTLE), and 371–374 (SSDQ).

The protein belongs to the UDP-glycosyltransferase family.

Possesses low quercetin 3-O-glucosyltransferase and 7-O-glucosyltransferase activities in vitro. This Arabidopsis thaliana (Mouse-ear cress) protein is UDP-glycosyltransferase 76E11 (UGT76E11).